Reading from the N-terminus, the 214-residue chain is Elongation factor Ts (214 aa).

Positions 80 to 83 (TDFV) are involved in Mg(2+) ion dislocation from EF-Tu.

It belongs to the EF-Ts family.

The protein localises to the cytoplasm. Functionally, associates with the EF-Tu.GDP complex and induces the exchange of GDP to GTP. It remains bound to the aminoacyl-tRNA.EF-Tu.GTP complex up to the GTP hydrolysis stage on the ribosome. This Syntrophomonas wolfei subsp. wolfei (strain DSM 2245B / Goettingen) protein is Elongation factor Ts.